A 63-amino-acid chain; its full sequence is Large ribosomal subunit protein uL30 (63 aa).

The protein belongs to the universal ribosomal protein uL30 family. In terms of assembly, part of the 50S ribosomal subunit.

The sequence is that of Large ribosomal subunit protein uL30 from Bradyrhizobium sp. (strain BTAi1 / ATCC BAA-1182).